Here is a 439-residue protein sequence, read N- to C-terminus: Damage-control phosphatase ARMT1 (439 aa).

The residue at position 2 (alanine 2) is an N-acetylalanine. Serine 4 is modified (phosphoserine). Lysine 40 bears the N6-acetyllysine mark. The Mn(2+) site is built by aspartate 251 and asparagine 252. 251–252 contributes to the substrate binding site; the sequence is DN. S-adenosyl-L-methionine-binding residues include glutamate 256 and aspartate 289. Mn(2+) is bound at residue aspartate 289. Substrate-binding positions include 365 to 369 and lysine 402; that span reads DLNYR. The short motif at 399–402 is the Subfamily III RTxK motif element; that stretch reads RTLK.

The protein belongs to the damage-control phosphatase family. Sugar phosphate phosphatase III subfamily. Mn(2+) is required as a cofactor. Requires Ni(2+) as cofactor. Automethylated.

The enzyme catalyses beta-D-fructose 1-phosphate + H2O = D-fructose + phosphate. It catalyses the reaction beta-D-fructose 6-phosphate = dihydroxyacetone + D-glyceraldehyde 3-phosphate. The catalysed reaction is L-glutamyl-[protein] + S-adenosyl-L-methionine = [protein]-L-glutamate 5-O-methyl ester + S-adenosyl-L-homocysteine. Metal-dependent phosphatase that shows phosphatase activity against several substrates, including fructose-1-phosphate and fructose-6-phosphate. Its preference for fructose-1-phosphate, a strong glycating agent that causes DNA damage rather than a canonical yeast metabolite, suggests a damage-control function in hexose phosphate metabolism. Has also been shown to have O-methyltransferase activity that methylates glutamate residues of target proteins to form gamma-glutamyl methyl ester residues. Possibly methylates PCNA, suggesting it is involved in the DNA damage response. This Mus musculus (Mouse) protein is Damage-control phosphatase ARMT1.